The sequence spans 259 residues: uncharacterized protein (259 aa).

Glutamate 46 is a catalytic residue.

Belongs to the PhzF family.

This is an uncharacterized protein from Pseudomonas aeruginosa (strain ATCC 15692 / DSM 22644 / CIP 104116 / JCM 14847 / LMG 12228 / 1C / PRS 101 / PAO1).